A 1045-amino-acid polypeptide reads, in one-letter code: Endoglucanase B (1045 aa).

The signal sequence occupies residues 1 to 33 (MLRQVPRTLVAGGSALAVAVGVLVAPLATGAAA). Residues 34-492 (APTYNYAEAL…LASFPTPEQP (459 aa)) form a catalytic region. The active-site Nucleophile is aspartate 91. Catalysis depends on residues histidine 410, aspartate 449, and glutamate 458. The CBM3 domain maps to 493 to 642 (DGDQLFVEAM…STLVWGKEPT (150 aa)). Linker ('hinge') (Pro-Thr box) regions lie at residues 644–650 (TTTDTTP), 734–748 (AAVT…ETEP), 831–846 (APVT…DTVA), and 931–944 (SPVT…TSTP). Fibronectin type-III domains follow at residues 653 to 743 (TPGT…TDTT), 751 to 840 (TPGT…TAAP), and 849 to 940 (VPGT…TLPV). A CBM2 domain is found at 939–1045 (PVTSTPSCTV…SFTVNGEVCG (107 aa)). Cysteine 946 and cysteine 1044 are disulfide-bonded.

Belongs to the glycosyl hydrolase 9 (cellulase E) family.

The catalysed reaction is Endohydrolysis of (1-&gt;4)-beta-D-glucosidic linkages in cellulose, lichenin and cereal beta-D-glucans.. Its function is as follows. The biological conversion of cellulose to glucose generally requires three types of hydrolytic enzymes: (1) Endoglucanases which cut internal beta-1,4-glucosidic bonds; (2) Exocellobiohydrolases that cut the disaccharide cellobiose from the non-reducing end of the cellulose polymer chain; (3) Beta-1,4-glucosidases which hydrolyze the cellobiose and other short cello-oligosaccharides to glucose. The chain is Endoglucanase B (cenB) from Cellulomonas fimi.